Here is a 429-residue protein sequence, read N- to C-terminus: Sex determination protein fox-1 (429 aa).

The segment covering alanine 156–aspartate 180 has biased composition (low complexity). Residues alanine 156–serine 188 are disordered. The region spanning lysine 183–alanine 259 is the RRM domain.

As to quaternary structure, interacts with sup-12. In terms of tissue distribution, in males and hermaphrodites expressed in a subset of cells in the head and tail. Expressed in the pharynx, intestine and in muscles from the vulva and body wall.

It localises to the nucleus. RNA-binding protein that regulates tissue-specific alternative splicing events by binding to 5'-UGCAUG-3' and 5'-GCACG-3' elements. Also binds to poly(A), poly(G), poly(C), or poly(U) stretches of RNA. Plays a role in the sex determination pathway and X chromosome dosage compensation, and together with sex-1 is involved in making the distinction between one and two X-chromosomes. Binds to 5'-GCAUG-3' and 5'-GCACG-3' elements in intron 6 of the pre-mRNA of the sex-determining factor xol-1 to promote its alternative splicing and together with sex-1 negatively regulates the expression of xol-1 to promote hermaphrodite development. Negatively regulates the expression of the active isoform of xol-1 (isoform b) by promoting intron 6 retention and the deletion of exon 7 coding sequences in hermaphrodite embryos. Furthermore, binding to the pre-mRNA of xol-1 can also direct the use of an alternative 3' splice site enabling the xol-1 transcript to be trans-spliced to unrelated genes on chromosome 2, which also leads to xol-1 exon 7 deletion. Does not seem to regulate the retention of introns 1 to 5 of xol-1 pre-mRNA. Plays a role in the association of the dosage compensation complex proteins dpy-27 and sdc-3 with the hermaphrodite X chromosomes. Binds to 5'-UGCAUG-3' elements in intron 7 of the pre-mRNA of unc-32 to promote its alternative splicing in neuronal tissues. Binds to 5'-UGCAUG-3' elements in intron 4 of the pre-mRNA of egl-15 to promote its alternative splicing in body wall muscle tissues. Promotes binding of RNA-binding protein sup-12 to target RNA. Plays a role in male mating behavior. The chain is Sex determination protein fox-1 from Caenorhabditis elegans.